A 393-amino-acid polypeptide reads, in one-letter code: NAD(P)H-quinone oxidoreductase subunit H, chloroplastic (393 aa).

This sequence belongs to the complex I 49 kDa subunit family. In terms of assembly, NDH is composed of at least 16 different subunits, 5 of which are encoded in the nucleus.

The protein localises to the plastid. It localises to the chloroplast thylakoid membrane. It catalyses the reaction a plastoquinone + NADH + (n+1) H(+)(in) = a plastoquinol + NAD(+) + n H(+)(out). It carries out the reaction a plastoquinone + NADPH + (n+1) H(+)(in) = a plastoquinol + NADP(+) + n H(+)(out). Functionally, NDH shuttles electrons from NAD(P)H:plastoquinone, via FMN and iron-sulfur (Fe-S) centers, to quinones in the photosynthetic chain and possibly in a chloroplast respiratory chain. The immediate electron acceptor for the enzyme in this species is believed to be plastoquinone. Couples the redox reaction to proton translocation, and thus conserves the redox energy in a proton gradient. The protein is NAD(P)H-quinone oxidoreductase subunit H, chloroplastic of Agrostis stolonifera (Creeping bentgrass).